The following is a 287-amino-acid chain: Bifunctional protein FolD 2 (287 aa).

NADP(+) is bound by residues 166 to 168 (GAS) and isoleucine 232.

This sequence belongs to the tetrahydrofolate dehydrogenase/cyclohydrolase family. In terms of assembly, homodimer.

It carries out the reaction (6R)-5,10-methylene-5,6,7,8-tetrahydrofolate + NADP(+) = (6R)-5,10-methenyltetrahydrofolate + NADPH. It catalyses the reaction (6R)-5,10-methenyltetrahydrofolate + H2O = (6R)-10-formyltetrahydrofolate + H(+). It functions in the pathway one-carbon metabolism; tetrahydrofolate interconversion. Its function is as follows. Catalyzes the oxidation of 5,10-methylenetetrahydrofolate to 5,10-methenyltetrahydrofolate and then the hydrolysis of 5,10-methenyltetrahydrofolate to 10-formyltetrahydrofolate. This is Bifunctional protein FolD 2 from Hydrogenovibrio crunogenus (strain DSM 25203 / XCL-2) (Thiomicrospira crunogena).